Here is a 657-residue protein sequence, read N- to C-terminus: Protein mono-ADP-ribosyltransferase TIPARP (657 aa).

Over residues 1–10 (MEMETTEPEP) the composition is skewed to acidic residues. The tract at residues 1–21 (MEMETTEPEPDCVVQPPSPPD) is disordered. C39 is subject to ADP-ribosylcysteine. A Nuclear localization signal motif is present at residues 41 to 47 (KKKDQKR). The segment at 237–264 (ENGIEICMDFLQGTCIYGRDCLKHHTVL) adopts a C3H1-type zinc-finger fold. The WWE domain maps to 332 to 410 (STPPSSNVNS…RRPLFRSCFI (79 aa)). The 209-residue stretch at 449–657 (YPETWVYMHP…YEEVSNTVSI (209 aa)) folds into the PARP catalytic domain.

The protein belongs to the ARTD/PARP family. Interacts with AHR. Post-translationally, auto-mono-ADP-ribosylated.

Its subcellular location is the nucleus. It carries out the reaction L-aspartyl-[protein] + NAD(+) = 4-O-(ADP-D-ribosyl)-L-aspartyl-[protein] + nicotinamide. The catalysed reaction is L-glutamyl-[protein] + NAD(+) = 5-O-(ADP-D-ribosyl)-L-glutamyl-[protein] + nicotinamide. It catalyses the reaction L-cysteinyl-[protein] + NAD(+) = S-(ADP-D-ribosyl)-L-cysteinyl-[protein] + nicotinamide + H(+). Its activity is regulated as follows. ADP-ribosyltransferase activity is inhibited by PJ34; inhibition is however not specific to TIPARP and other PARP-domain containing proteins are also inhibited by PJ34. Partially inhibited by KU0058948. Its function is as follows. ADP-ribosyltransferase that mediates mono-ADP-ribosylation of glutamate, aspartate and cysteine residues on target proteins. Acts as a negative regulator of AHR by mediating mono-ADP-ribosylation of AHR, leading to inhibit transcription activator activity of AHR. The polypeptide is Protein mono-ADP-ribosyltransferase TIPARP (Homo sapiens (Human)).